A 285-amino-acid chain; its full sequence is Type II secretion system protein C (285 aa).

The Cytoplasmic segment spans residues 1-27 (MARLQAFKDPSFHSLVATFRSLPLIRR). Residues 28-48 (FVLGLILLLICQQLAVLTWRF) form a helical membrane-spanning segment. Over 49–285 (LLPEDSRIVG…DIYLALDGDH (237 aa)) the chain is Periplasmic.

This sequence belongs to the GSP C family.

Its subcellular location is the cell inner membrane. Functionally, involved in a type II secretion system (T2SS, formerly general secretion pathway, GSP) for the export of proteins. Required for the translocation of the multiple pectic enzymes. In Pectobacterium carotovorum subsp. carotovorum (Erwinia carotovora subsp. carotovora), this protein is Type II secretion system protein C (outC).